The sequence spans 585 residues: Amyloid protein-binding protein 2 (585 aa).

TPR repeat units lie at residues 50–83 (QGRL…HHCF), 120–153 (IQVG…CTLH), 206–239 (AALY…ITAG), 288–321 (SDTL…RQSV), 333–367 (HEDL…ITHI), 429–462 (AKHY…KEQL), 471–505 (ALSV…GKKL), and 514–547 (EYDY…NRLR).

As to quaternary structure, component of a CRL2 E3 ubiquitin-protein ligase complex, also named ECS (Elongin BC-CUL2/5-SOCS-box protein) complex, composed of CUL2, Elongin BC (ELOB and ELOC), RBX1 and substrate-specific adapter APPBP2. Interacts with APP; APP interaction inhibits the E3 ubiquitin-protein ligase activity of the CRL2(APPBP2) complex. Rapidly degraded by the proteasome upon overexpression of a C-terminal fragment of APP.

Its subcellular location is the nucleus. It is found in the cytoplasm. The protein localises to the cytoskeleton. The protein resides in the membrane. It functions in the pathway protein modification; protein ubiquitination. E3 ubiquitin-protein ligase activity of the CRL2(APPBP2) complex is inhibited by APP. In terms of biological role, substrate-recognition component of a Cul2-RING (CRL2) E3 ubiquitin-protein ligase complex of the DesCEND (destruction via C-end degrons) pathway, which recognizes a C-degron located at the extreme C terminus of target proteins, leading to their ubiquitination and degradation. The C-degron recognized by the DesCEND pathway is usually a motif of less than ten residues and can be present in full-length proteins, truncated proteins or proteolytically cleaved forms. The CRL2(APPBP2) complex specifically recognizes proteins with a -Arg-Xaa-Xaa-Gly degron at the C-terminus, leading to their ubiquitination and degradation. The CRL2(APPBP2) complex mediates ubiquitination and degradation of truncated SELENOV selenoproteins produced by failed UGA/Sec decoding, which end with a -Arg-Xaa-Xaa-Gly degron. May play a role in intracellular protein transport: may be involved in the translocation of APP along microtubules toward the cell surface. This chain is Amyloid protein-binding protein 2, found in Homo sapiens (Human).